Here is a 153-residue protein sequence, read N- to C-terminus: Protein-export protein SecB (153 aa).

This sequence belongs to the SecB family. In terms of assembly, homotetramer, a dimer of dimers. One homotetramer interacts with 1 SecA dimer.

The protein localises to the cytoplasm. Functionally, one of the proteins required for the normal export of preproteins out of the cell cytoplasm. It is a molecular chaperone that binds to a subset of precursor proteins, maintaining them in a translocation-competent state. It also specifically binds to its receptor SecA. This Edwardsiella ictaluri (strain 93-146) protein is Protein-export protein SecB.